A 260-amino-acid chain; its full sequence is HTH-type transcriptional repressor NanR (260 aa).

The region spanning 27–95 (KKLSEMVEEE…NGERARVSRP (69 aa)) is the HTH gntR-type domain. Positions 55–74 (ERELMAFFNVGRPSVREALA) form a DNA-binding region, H-T-H motif.

This sequence belongs to the NanR family.

Transcriptional repressor that controls expression of the genes required for the catabolism of sialic acids. This chain is HTH-type transcriptional repressor NanR, found in Citrobacter rodentium (strain ICC168) (Citrobacter freundii biotype 4280).